The following is a 356-amino-acid chain: Guanine nucleotide-binding protein alpha-17 subunit (356 aa).

Gly-2 carries N-myristoyl glycine lipidation. The S-palmitoyl cysteine moiety is linked to residue Cys-4. Residues 32–356 (SIVKLLLLGA…QKNLQKAGMM (325 aa)) enclose the G-alpha domain. Residues 35-48 (KLLLLGAGECGKST) are G1 motif. GTP-binding positions include 40–47 (GAGECGKS), 177–183 (LYSRVAT), 202–206 (DVGGQ), 271–274 (NKKD), and Ala-328. 2 residues coordinate Mg(2+): Ser-47 and Thr-183. The segment at 175-183 (DILYSRVAT) is G2 motif. Positions 198-207 (FRVFDVGGQR) are G3 motif. Residues 267–274 (ILFMNKKD) form a G4 motif region. Residues 326-331 (TCATDT) form a G5 motif region.

The protein belongs to the G-alpha family. In terms of assembly, g proteins are composed of 3 units; alpha, beta and gamma. The alpha chain contains the guanine nucleotide binding site. As to expression, expressed in sensory neurons in the head and tail. Expressed in amphid AWC neurons, to a lesser extent in AWB and weakly in AWA, ASH and ADF neurons (head sensory neurons). Expressed in phasmid PHA and PHB neurons (tail sensory neurons).

It is found in the cell projection. It localises to the cilium. The protein localises to the dendrite. Its function is as follows. Guanine nucleotide-binding proteins (G proteins) are involved as modulators or transducers in various transmembrane signaling systems. This specific G-alpha subunit plays an important role in olfaction and in cilia morphogenesis. Involved in chemotactic responses to attractants diacetyl, pyrazine, 2,4,5-trimethylthiazole, benzaldehyde, isoamyl alcohol, butanone and 2,3-pentanedione. Displays a redundant function with gpa-3 in chemotactic responses. Plays a role in the avoidance response to the noxious chemical quinine in ASH sensory neurons. Involved in avoidance responses to copper, sodium dodecyl sulfate and linoleic acid. Involved in osmotic avoidance and mechanosensory responses. Involved in specifying fan-like morphology of cilia of head sensory neurons AWC. Plays a role in the detection of preferred food sources by mediating the recognition of food odors in olfactory sensory neurons. The protein is Guanine nucleotide-binding protein alpha-17 subunit of Caenorhabditis elegans.